A 329-amino-acid chain; its full sequence is Transcription factor MYB2 (329 aa).

2 consecutive HTH myb-type domains span residues 17 to 69 (GGDL…LNYL) and 70 to 124 (RPDL…QKHA). 2 consecutive DNA-binding regions (H-T-H motif) follow at residues 45–69 (WNSLARSAGLKRTGKSCRLRWLNYL) and 97–120 (WSKIAQHLPGRTDNEIKNYWRTRV). Low complexity-rich tracts occupy residues 155–166 (AAAGQQQQQEGG) and 217–235 (LSSTTAGSSSLSTDSGAGA). Disordered stretches follow at residues 155–189 (AAAGQQQQQEGGTDTPPLSWQHGGSDGLYESPELP) and 206–242 (GAQSGGTPAPELSSTTAGSSSLSTDSGAGAQPSWPTQ).

As to expression, highly expressed in leaves. Expressed in roots and shoots. Expressed at low levels in flowers.

Its subcellular location is the nucleus. Functionally, transcription factor involved in abiotic stress responses. Plays a regulatory role in tolerance to salt, cold, and drought stresses. Positively regulates the expression of genes involved in proline synthesis and transport, and genes involved in reactive oxygen species (ROS) scavenging such as peroxidase, superoxide dismutase and catalase during salt stress. Transactivates stress-related genes, including LEA3, RAB16A and DREB2A during salt stress. This chain is Transcription factor MYB2, found in Oryza sativa subsp. japonica (Rice).